We begin with the raw amino-acid sequence, 263 residues long: Putative hydro-lyase Pden_0321 (263 aa).

The protein belongs to the D-glutamate cyclase family.

The chain is Putative hydro-lyase Pden_0321 from Paracoccus denitrificans (strain Pd 1222).